Reading from the N-terminus, the 140-residue chain is Nucleoside diphosphate kinase (140 aa).

Residues Lys11, Phe59, Arg87, Thr93, Arg104, and Asn114 each contribute to the ATP site. His117 acts as the Pros-phosphohistidine intermediate in catalysis.

This sequence belongs to the NDK family. Homotetramer. Mg(2+) is required as a cofactor.

The protein localises to the cytoplasm. It catalyses the reaction a 2'-deoxyribonucleoside 5'-diphosphate + ATP = a 2'-deoxyribonucleoside 5'-triphosphate + ADP. The enzyme catalyses a ribonucleoside 5'-diphosphate + ATP = a ribonucleoside 5'-triphosphate + ADP. Major role in the synthesis of nucleoside triphosphates other than ATP. The ATP gamma phosphate is transferred to the NDP beta phosphate via a ping-pong mechanism, using a phosphorylated active-site intermediate. The polypeptide is Nucleoside diphosphate kinase (Novosphingobium aromaticivorans (strain ATCC 700278 / DSM 12444 / CCUG 56034 / CIP 105152 / NBRC 16084 / F199)).